The sequence spans 2896 residues: Protein PRRC2C (2896 aa).

K27 bears the N6-acetyllysine mark. Residues 28–212 (GKSLETQKTT…STAGTSEQND (185 aa)) are disordered. The span at 88-97 (QEQHEEEKTP) shows a compositional bias: basic and acidic residues. Positions 105-119 (KPGVAAPPEVAPAPK) are enriched in low complexity. The span at 134–144 (QVNSQFQQEFP) shows a compositional bias: polar residues. Residues 151–160 (DQEKKEKETN) show a composition bias toward basic and acidic residues. Residues S187 and S191 each carry the phosphoserine modification. Polar residues predominate over residues 201–211 (DESTAGTSEQN). Position 242 is an asymmetric dimethylarginine; alternate (R242). Position 242 is an omega-N-methylarginine; alternate (R242). 2 positions are modified to asymmetric dimethylarginine: R255 and R266. Disordered regions lie at residues 264-729 (PMRF…QHLA) and 750-788 (SGRPAMDIPPIHPGMIPPKPLMRRDQMEGSPNSSESFEH). An omega-N-methylarginine mark is found at R279 and R281. Basic and acidic residues predominate over residues 301-310 (ELKELDKFDN). S335 carries the phosphoserine modification. Over residues 341-358 (GSNSPKENNSEDQGSKAS) the composition is skewed to polar residues. Positions 359 to 368 (ENNENKKETD) are enriched in basic and acidic residues. Residues 370-381 (VSNTKSSSQIPA) are compositionally biased toward polar residues. Position 392 is an N6-acetyllysine (K392). Phosphoserine is present on residues S395 and S500. The segment covering 395–405 (SFNQERGTSSH) has biased composition (polar residues). Positions 465 to 648 (RREEEERRME…EATPVVHETE (184 aa)) are enriched in basic and acidic residues. The span at 676 to 708 (QRQQEQMKQQQWQQQQQQGVLPQTVPSQPSSST) shows a compositional bias: low complexity. The span at 759–769 (PIHPGMIPPKP) shows a compositional bias: pro residues. Phosphoserine occurs at positions 779, 785, and 801. Residues 804–1118 (RMLWGSDPYP…PVSTVQVEPA (315 aa)) form a disordered region. 3 stretches are compositionally biased toward basic and acidic residues: residues 825–836 (ATEEPEDVRSEA), 852–867 (NQLEAHPKADFIRESS), and 878–888 (SVEDVRPHHTD). Phosphoserine occurs at positions 867, 878, 920, and 929. Composition is skewed to basic and acidic residues over residues 954–993 (IDSKEPIERPEEKPKKEGFIRSSEGPKPEKVYKSKSETRW), 1000–1010 (NRREEVNDRPV), and 1020–1058 (VLRDMKEEREQRKEKEGEKAEKVTEKVVVKPEKTEKKDL). The stretch at 1020 to 1046 (VLRDMKEEREQRKEKEGEKAEKVTEKV) forms a coiled coil. Residues 1059 to 1081 (PPPPPPPQPPAPIQPQSVPPPIQ) are compositionally biased toward pro residues. A compositionally biased stretch (polar residues) spans 1089 to 1100 (STETATLAQKPS). Residue K1133 forms a Glycyl lysine isopeptide (Lys-Gly) (interchain with G-Cter in SUMO2) linkage. 4 stretches are compositionally biased toward basic and acidic residues: residues 1143–1163 (SKDLVIERPRPDSRPAVKKES), 1170–1180 (YWKEARERDWF), 1214–1230 (HTRDYPQYRDNKPRAEH), and 1237–1248 (RQREESETRSES). 8 disordered regions span residues 1143–1647 (SKDL…DALS), 1670–1785 (EDPQ…SAPV), 1905–1991 (APAS…TAEL), 2005–2164 (ISKK…VSEM), 2218–2238 (LPNTLPLPKRETIQQSSSLTS), 2257–2290 (WENSPNVREKGSPVTSTAPPIATGVSSSASGPST), 2317–2341 (GAGTYTTSSLSTKSTTTSDPPNICK), and 2668–2701 (DIKPGTPPIAGRSTTPTSSPFRATSTSPNSQSSK). Residues S1242, S1246, S1248, S1249, and S1263 each carry the phosphoserine modification. 4 stretches are compositionally biased toward basic and acidic residues: residues 1261-1297 (RGSETDTDSEIHESASDKDSLSKGKLPKREERPENKK), 1305-1330 (FKPDNHVRIDNRLLEKPYVRDDDKAK), 1381-1418 (EVPKPEDGEPPRRHEQFIPIAADKRPPKFERKFDPARE), and 1429-1446 (PRQDKPPRFRRLREREAA). A phosphothreonine mark is found at T1265 and T1267. Composition is skewed to polar residues over residues 1457-1469 (TNGTVNNVAQEPV) and 1477-1491 (GNKTPDLSNQNSSDQ). A compositionally biased stretch (basic and acidic residues) spans 1505–1517 (FNERRERDEKKNA). S1544 bears the Phosphoserine mark. Basic and acidic residues-rich tracts occupy residues 1620–1634 (NSKDSTGKKREDPKP) and 1692–1704 (RLQDEERRKKEEQ). The stretch at 1682 to 1717 (TEVVSKKQQKRLQDEERRKKEEQVIQVWNKKNANEK) forms a coiled coil. Over residues 1742 to 1785 (SSASVPPLASAPLPPSTSASVPASTSAPLPATLTPVPASTSAPV) the composition is skewed to low complexity. The span at 1913 to 1929 (APAPTPVSAPNPAPPAP) shows a compositional bias: pro residues. Residues 1943 to 1952 (PLQTTSQSSK) are compositionally biased toward low complexity. T1965 is modified (phosphothreonine). Positions 1976–1986 (KSIQTPQSHGT) are enriched in polar residues. Phosphoserine is present on residues S1983 and S2013. Residues 2019–2035 (SVSAWNKPLTSFGSAPS) are compositionally biased toward polar residues. The span at 2075–2088 (KSADKIPEPKEQRQ) shows a compositional bias: basic and acidic residues. A Phosphoserine modification is found at S2105. Residues 2108–2132 (ENKEHKPGPIGKERSLKNRKVKDAQ) are compositionally biased toward basic and acidic residues. S2143 is modified (phosphoserine). Over residues 2257–2267 (WENSPNVREKG) the composition is skewed to basic and acidic residues. S2260 is modified (phosphoserine). The span at 2269–2290 (PVTSTAPPIATGVSSSASGPST) shows a compositional bias: polar residues. Over residues 2320 to 2334 (TYTTSSLSTKSTTTS) the composition is skewed to low complexity. Residues T2673 and T2682 each carry the phosphothreonine modification. The segment covering 2679 to 2701 (RSTTPTSSPFRATSTSPNSQSSK) has biased composition (polar residues). Phosphoserine is present on residues S2686 and S2694. R2814 carries the post-translational modification Omega-N-methylarginine. R2823 carries the asymmetric dimethylarginine; alternate modification. The residue at position 2823 (R2823) is an Omega-N-methylarginine; alternate. The segment covering 2824–2833 (FFSEQQQSKQ) has biased composition (polar residues). The tract at residues 2824-2896 (FFSEQQQSKQ…QAIKTEETKS (73 aa)) is disordered.

Overexpressed in bladder cancer.

The protein localises to the cytoplasm. The protein resides in the stress granule. Its function is as follows. Required for efficient formation of stress granules. The polypeptide is Protein PRRC2C (Homo sapiens (Human)).